The sequence spans 478 residues: Cytochrome c-552 (478 aa).

The first 26 residues, 1-26 (MARKTLRARRFFSLIFPFFFITSVYA), serve as a signal peptide directing secretion. A heme c-binding site is contributed by H94. Residues C122, C125, and K126 each contribute to the heme site. C160, C163, H164, C209, C212, and H213 together coordinate heme c. The Ca(2+) site is built by E215, Y216, K261, and Q263. Substrate is bound at residue Y216. H264 is a binding site for substrate. Residues H275, C282, C285, H286, H301, C314, C317, H318, and H393 each contribute to the heme c site.

The protein belongs to the cytochrome c-552 family. It depends on Ca(2+) as a cofactor. The cofactor is heme c.

The protein resides in the periplasm. It carries out the reaction 6 Fe(III)-[cytochrome c] + NH4(+) + 2 H2O = 6 Fe(II)-[cytochrome c] + nitrite + 8 H(+). The protein operates within nitrogen metabolism; nitrate reduction (assimilation). Functionally, catalyzes the reduction of nitrite to ammonia, consuming six electrons in the process. This is Cytochrome c-552 from Salmonella paratyphi C (strain RKS4594).